The chain runs to 499 residues: D-alanine--D-alanyl carrier protein ligase (499 aa).

152-153 (TS) provides a ligand contact to ATP. Asp-197 is a D-alanine binding site. ATP-binding positions include 292 to 297 (NTYGPT), Asp-372, 384 to 387 (YQGR), and Lys-485. Lys-485 contacts D-alanine.

Belongs to the ATP-dependent AMP-binding enzyme family. DltA subfamily.

It is found in the cytoplasm. It carries out the reaction holo-[D-alanyl-carrier protein] + D-alanine + ATP = D-alanyl-[D-alanyl-carrier protein] + AMP + diphosphate. It functions in the pathway cell wall biogenesis; lipoteichoic acid biosynthesis. Its function is as follows. Catalyzes the first step in the D-alanylation of lipoteichoic acid (LTA), the activation of D-alanine and its transfer onto the D-alanyl carrier protein (Dcp) DltC. In an ATP-dependent two-step reaction, forms a high energy D-alanyl-AMP intermediate, followed by transfer of the D-alanyl residue as a thiol ester to the phosphopantheinyl prosthetic group of the Dcp. D-alanylation of LTA plays an important role in modulating the properties of the cell wall in Gram-positive bacteria, influencing the net charge of the cell wall. The protein is D-alanine--D-alanyl carrier protein ligase of Lactococcus lactis subsp. lactis (strain IL1403) (Streptococcus lactis).